Here is a 150-residue protein sequence, read N- to C-terminus: 3-hydroxyacyl-[acyl-carrier-protein] dehydratase FabZ (150 aa).

Histidine 56 is a catalytic residue.

Belongs to the thioester dehydratase family. FabZ subfamily.

The protein localises to the cytoplasm. It catalyses the reaction a (3R)-hydroxyacyl-[ACP] = a (2E)-enoyl-[ACP] + H2O. Its function is as follows. Involved in unsaturated fatty acids biosynthesis. Catalyzes the dehydration of short chain beta-hydroxyacyl-ACPs and long chain saturated and unsaturated beta-hydroxyacyl-ACPs. This chain is 3-hydroxyacyl-[acyl-carrier-protein] dehydratase FabZ, found in Desulfotalea psychrophila (strain LSv54 / DSM 12343).